The following is a 706-amino-acid chain: Double-strand break repair protein MRE11 (706 aa).

S2 is subject to N-acetylserine. S2 is subject to Phosphoserine. 3 residues coordinate Mn(2+): D20, H22, and D60. Residues 87–117 are interaction with NBN; the sequence is RPVQFEVISDQSVNFGFSKFPWVNYQDGNLN. N128 is a binding site for Mn(2+). H129 (proton donor) is an active-site residue. The Mn(2+) site is built by H217, H245, and H247. A Glycyl lysine isopeptide (Lys-Gly) (interchain with G-Cter in SUMO2) cross-link involves residue K255. S275 carries the post-translational modification Phosphoserine. K282 is covalently cross-linked (Glycyl lysine isopeptide (Lys-Gly) (interchain with G-Cter in UFM1)). Residue K339 forms a Glycyl lysine isopeptide (Lys-Gly) (interchain with G-Cter in ubiquitin) linkage. Glycyl lysine isopeptide (Lys-Gly) (interchain with G-Cter in SUMO) cross-links involve residues K384 and K468. Residue K481 forms a Glycyl lysine isopeptide (Lys-Gly) (interchain with G-Cter in ubiquitin) linkage. The segment covering 505 to 514 has biased composition (basic and acidic residues); the sequence is FRESRQRNTN. Positions 505 to 706 are disordered; sequence FRESRQRNTN…SSSCPRRNRR (202 aa). The span at 531–541 shows a compositional bias: polar residues; sequence RSQSETSTSAF. Residues 569-579 are compositionally biased toward basic residues; it reads GRGRGRGRRGA. Residues R570, R572, R574, R576, R577, R580, R587, R592, and R594 each carry the asymmetric dimethylarginine modification. The GAR signature appears at 570-594; sequence RGRGRGRRGARGQSSAPRGGSQRGR. Low complexity predominate over residues 580-589; it reads RGQSSAPRGG. Residues 603–617 show a composition bias toward polar residues; it reads RGRSSKATSSTSRNM. Residues S618, S640, and S648 each carry the phosphoserine modification. The span at 643 to 653 shows a compositional bias: acidic residues; it reads IEVDDSDEDDI. Residues 655–679 are compositionally biased toward polar residues; that stretch reads PTNSRADQRWSGTTSSKRMSQSQTA. K671 bears the N6-lactoyllysine mark. 4 positions are modified to phosphoserine: S674, S676, S686, and S699. A compositionally biased stretch (acidic residues) spans 684-694; sequence FESDEDDDDDP.

This sequence belongs to the MRE11/RAD32 family. In terms of assembly, component of the MRN complex composed of two heterodimers RAD50 and MRE11 associated with a single NBN. The MRN complexes dimerize on DNA to form joined MRN-MRN oligomers required for DNA double-strand break repair. As part of the MRN complex, interacts with MCM9; the interaction recruits the complex to DNA repair sites. Component of the BASC complex, at least composed of BRCA1, MSH2, MSH6, MLH1, ATM, BLM, RAD50, MRE11 and NBN. Found in a complex with TERF2. Interacts with DCLRE1C/Artemis and DCLRE1B/Apollo. Interacts with ATF2. Interacts with EXD2. Interacts with MRNIP. Interacts with SAMHD1; leading to stimulate 3'-5' exonuclease activity. Interacts (when ubiquitinated) with UBQLN4 (via its UBA domain). Interacts with CYREN (via XLF motif). Interacts with GFI1; promoting methylation by PRMT1. Interacts with DYNLL1; inhibiting the activity of MRE11. Interacts with C1QBP and RAD50; interaction takes place in absence of DNA damage to form the MRC (MRE11-RAD50-C1QBP) complex that inhibits the activity of MRE11. Interacts with AGER/RAGE; AGER is recruited to DNA double-strand break sites where it enhances MRE11 endonuclease activity to promote DNA repair. Requires Mn(2+) as cofactor. Phosphorylated by ATM at Ser-674 and Ser-676 in response to DNA damage, promoting MRE11 activity: phosphorylation activates MRE11 by preventing the interaction between MRE11 and the C1QBP inhibitor. Phosphorylation at Ser-648 by PLK1 primes for phosphorylation at Ser-686 by CK2, inhibiting recruitment of the MRN complex to DNA damage sites. In terms of processing, asymmetric dimethylation by PRMT1 promotes MRE11 exonuclease activity. Post-translationally, lactylation at Lys-671 by CREBBP/CBP in response to DNA damage promotes DNA binding and MRE11 activity. Acetylated on lysine residues by KAT2A /GCN5. In terms of processing, ubiquitinated following DNA damage. Ubiquitination triggers interaction with UBQLN4, leading to MRE11 removal from chromatin and degradation by the proteasome. Ubiquitinated at Lys-339 and Lys-481 by RNF126 via 'Lys-27'- and 'Lys-29'-linked polyubiquitin chains, promoting the exonuclease activity of MRE11. Post-translationally, SUMOylated by PIAS1, stabilizing MRE11 on chromatin during end resection. DeSUMOylated by SENP3 following removal from DNA double-strand breaks (DSBs). Ufmylation at Lys-282 promotes MRE11 activity and is required for activation of the ATM and ATR kinases by the MRN complex.

It localises to the nucleus. The protein resides in the chromosome. Its subcellular location is the telomere. With respect to regulation, interaction with SAMHD1 stimulates the double-strand-specific 3'-5' exonuclease activity. RBBP8/CtIP specifically promotes the endonuclease activity to clear protein-DNA adducts and generate clean double-strand break ends. DYNLL1-binding inhibits the activity of MRE11. MRE11 activity is inhibited by C1QBP: in absence of DNA damage, C1QBP interacts with unphosphorylated MRE11, preventing formation and activity of the MRN complex. In terms of biological role, core component of the MRN complex, which plays a central role in double-strand break (DSB) repair, DNA recombination, maintenance of telomere integrity and meiosis. The MRN complex is involved in the repair of DNA double-strand breaks (DSBs) via homologous recombination (HR), an error-free mechanism which primarily occurs during S and G2 phases. The complex (1) mediates the end resection of damaged DNA, which generates proper single-stranded DNA, a key initial steps in HR, and is (2) required for the recruitment of other repair factors and efficient activation of ATM and ATR upon DNA damage. Within the MRN complex, MRE11 possesses both single-strand endonuclease activity and double-strand-specific 3'-5' exonuclease activity. After DSBs, MRE11 is loaded onto DSBs sites and cleaves DNA by cooperating with RBBP8/CtIP to initiate end resection. MRE11 first endonucleolytically cleaves the 5' strand at DNA DSB ends to prevent non-homologous end joining (NHEJ) and licence HR. It then generates a single-stranded DNA gap via 3' to 5' exonucleolytic degradation to create entry sites for EXO1- and DNA2-mediated 5' to 3' long-range resection, which is required for single-strand invasion and recombination. RBBP8/CtIP specifically promotes the endonuclease activity of MRE11 to clear protein-DNA adducts and generate clean double-strand break ends. MRE11 endonuclease activity is also enhanced by AGER/RAGE. The MRN complex is also required for DNA damage signaling via activation of the ATM and ATR kinases: the nuclease activity of MRE11 is not required to activate ATM and ATR. The MRN complex is also required for the processing of R-loops. The MRN complex is involved in the activation of the cGAS-STING pathway induced by DNA damage during tumorigenesis: the MRN complex acts by displacing CGAS from nucleosome sequestration, thereby activating it. In telomeres the MRN complex may modulate t-loop formation. This is Double-strand break repair protein MRE11 from Mus musculus (Mouse).